Consider the following 311-residue polypeptide: Malate dehydrogenase (311 aa).

Residues 7-13 (GAAGGIG) and Asp-34 contribute to the NAD(+) site. Arg-81 and Arg-87 together coordinate substrate. Residues Asn-94 and 117-119 (ITN) contribute to the NAD(+) site. Asn-119 and Arg-153 together coordinate substrate. The Proton acceptor role is filled by His-177. Residue Met-227 coordinates NAD(+).

The protein belongs to the LDH/MDH superfamily. MDH type 1 family. As to quaternary structure, homodimer.

It catalyses the reaction (S)-malate + NAD(+) = oxaloacetate + NADH + H(+). Its function is as follows. Catalyzes the reversible oxidation of malate to oxaloacetate. The polypeptide is Malate dehydrogenase (Shewanella sediminis (strain HAW-EB3)).